The sequence spans 308 residues: MELIKEIKNLKRNKNAIILGHNYMEYGVQLVSDFTGDSYDLAVKAMKTNADIIVFAGVYFMAEQAAALNPDKKVLSPDPNAGCSLSDSLDVDTLKKYKEMYPNAPVVLYINTSIYTKALADYIVTSSTAIKVVKSLDADTIIFGPDANLANYVERKTGKRLVKVPPNGRCIVHANYTRQLVELARKKYPNAILMAHPESPLEILEASDFVGSTNQMIKFAKESPYKEFIVATELGMINALKLQVPEKTFYPLVTTEAYACARCPYMAMITLEKIKRSLEEEIYEVKVPKDIAERAKEAFERTMRLLNN.

Iminosuccinate is bound by residues His21 and Ser38. Cys83 contacts [4Fe-4S] cluster. Residues 109–111 (YIN) and Ser126 contribute to the iminosuccinate site. Residue Cys170 coordinates [4Fe-4S] cluster. Iminosuccinate is bound by residues 196-198 (HPE) and Thr213. Cys263 lines the [4Fe-4S] cluster pocket.

This sequence belongs to the quinolinate synthase family. Type 2 subfamily. Requires [4Fe-4S] cluster as cofactor.

The protein resides in the cytoplasm. It carries out the reaction iminosuccinate + dihydroxyacetone phosphate = quinolinate + phosphate + 2 H2O + H(+). The protein operates within cofactor biosynthesis; NAD(+) biosynthesis; quinolinate from iminoaspartate: step 1/1. Its function is as follows. Catalyzes the condensation of iminoaspartate with dihydroxyacetone phosphate to form quinolinate. This is Quinolinate synthase from Sulfurisphaera tokodaii (strain DSM 16993 / JCM 10545 / NBRC 100140 / 7) (Sulfolobus tokodaii).